We begin with the raw amino-acid sequence, 281 residues long: Trypsin zeta (281 aa).

Positions 1-23 (MSSSSWLGCLLAVLLSALALSQG) are cleaved as a signal peptide. The propeptide at 24-39 (LPLLEDLDENSFPDGR) is activation peptide. One can recognise a Peptidase S1 domain in the interval 40–279 (IVGGYVTDIA…LRPWIDAVRA (240 aa)). An intrachain disulfide couples cysteine 73 to cysteine 89. Active-site charge relay system residues include histidine 88 and aspartate 135. Cystine bridges form between cysteine 199–cysteine 219 and cysteine 231–cysteine 255. The active-site Charge relay system is serine 235.

It belongs to the peptidase S1 family.

The protein resides in the secreted. Its subcellular location is the extracellular space. It carries out the reaction Preferential cleavage: Arg-|-Xaa, Lys-|-Xaa.. The polypeptide is Trypsin zeta (zetaTry) (Drosophila erecta (Fruit fly)).